The primary structure comprises 185 residues: Thiol:disulfide interchange protein DsbE (185 aa).

Topologically, residues 1 to 4 (MKRN) are cytoplasmic. The chain crosses the membrane as a helical span at residues 5–25 (VLLLPLLIFLLIAAALLWQLA). Residues 26 to 185 (RNAQGDDPTN…WDRYSREAAQ (160 aa)) lie on the Periplasmic side of the membrane. The region spanning 39–177 (ALTGKPVPAF…WESELKPLWD (139 aa)) is the Thioredoxin domain. The cysteines at positions 80 and 83 are disulfide-linked.

The protein belongs to the thioredoxin family. DsbE subfamily.

The protein localises to the cell inner membrane. Its function is as follows. Involved in disulfide bond formation. Catalyzes a late, reductive step in the assembly of periplasmic c-type cytochromes, probably the reduction of disulfide bonds of the apocytochrome c to allow covalent linkage with the heme. Possible subunit of a heme lyase. The polypeptide is Thiol:disulfide interchange protein DsbE (dsbE1) (Salmonella typhimurium (strain LT2 / SGSC1412 / ATCC 700720)).